Here is a 307-residue protein sequence, read N- to C-terminus: D-alanine--D-alanine ligase (307 aa).

The region spanning 101 to 301 (KDVLRAAGVP…FGELVRWMVE (201 aa)) is the ATP-grasp domain. An ATP-binding site is contributed by 128-182 (MTPPYVVKPLGEGSSFGVIIVRADQTHPPQELTRDDWAYGDLVLVERFVAGRELT). Mg(2+) is bound by residues D251, E268, and N270.

The protein belongs to the D-alanine--D-alanine ligase family. Requires Mg(2+) as cofactor. It depends on Mn(2+) as a cofactor.

The protein localises to the cytoplasm. It catalyses the reaction 2 D-alanine + ATP = D-alanyl-D-alanine + ADP + phosphate + H(+). It functions in the pathway cell wall biogenesis; peptidoglycan biosynthesis. Functionally, cell wall formation. The sequence is that of D-alanine--D-alanine ligase from Methylocella silvestris (strain DSM 15510 / CIP 108128 / LMG 27833 / NCIMB 13906 / BL2).